Reading from the N-terminus, the 435-residue chain is Temperature-sensitive sn-2 acyl-lipid omega-3 desaturase (ferredoxin), chloroplastic (435 aa).

The N-terminal 42 residues, 1–42 (MASSVLSECGFRPLPRFYPKHTTSFASNPKPTFKFNPPLKPP), are a transit peptide targeting the chloroplast. A run of 2 helical transmembrane segments spans residues 111 to 131 (MSYVVRDVAIVFGLAAVAAYF) and 134 to 154 (WLLWPLYWFAQGTMFWALFVL). Positions 156–160 (HDCGH) match the Histidine box-1 motif. The short motif at 192 to 196 (HRTHH) is the Histidine box-2 element. 2 helical membrane-spanning segments follow: residues 268–290 (VLTSTACWTAMAALLVCLNFVMG) and 297–319 (LYGIPYWIFVMWLDFVTYLHHHG). The Histidine box-3 signature appears at 359 to 363 (HVIHH).

It belongs to the fatty acid desaturase type 1 family.

The protein resides in the plastid. Its subcellular location is the chloroplast membrane. The enzyme catalyses a (7Z,10Z)-hexadecadienoyl-containing glycerolipid + 2 reduced [2Fe-2S]-[ferredoxin] + O2 + 2 H(+) = a (7Z,10Z,13Z)-hexadecatrienoyl-containing glycerolipid + 2 oxidized [2Fe-2S]-[ferredoxin] + 2 H2O. The catalysed reaction is a (9Z,12Z)-octadecadienoyl-containing glycerolipid + 2 reduced [2Fe-2S]-[ferredoxin] + O2 + 2 H(+) = (9Z,12Z,15Z)-octadecatrienoyl-containing glycerolipid + 2 oxidized [2Fe-2S]-[ferredoxin] + 2 H2O. It participates in lipid metabolism; polyunsaturated fatty acid biosynthesis. Functionally, chloroplast omega-3 fatty acid desaturase introduces the third double bond in the biosynthesis of 16:3 and 18:3 fatty acids, important constituents of plant membranes. It is thought to use ferredoxin as an electron donor and to act on fatty acids esterified to galactolipids, sulfolipids and phosphatidylglycerol. This chain is Temperature-sensitive sn-2 acyl-lipid omega-3 desaturase (ferredoxin), chloroplastic, found in Arabidopsis thaliana (Mouse-ear cress).